The primary structure comprises 89 residues: MSITAERTQELVKEYATKEGDTGSAEVQVAILSERIRNLTEHLKSHKKDFHSRRGLLIMVGQRRRMLDYLKAKDNKRYEGLIGRLGLRK.

This sequence belongs to the universal ribosomal protein uS15 family. As to quaternary structure, part of the 30S ribosomal subunit. Forms a bridge to the 50S subunit in the 70S ribosome, contacting the 23S rRNA.

Its function is as follows. One of the primary rRNA binding proteins, it binds directly to 16S rRNA where it helps nucleate assembly of the platform of the 30S subunit by binding and bridging several RNA helices of the 16S rRNA. Forms an intersubunit bridge (bridge B4) with the 23S rRNA of the 50S subunit in the ribosome. The polypeptide is Small ribosomal subunit protein uS15 (Paramagnetospirillum magneticum (strain ATCC 700264 / AMB-1) (Magnetospirillum magneticum)).